The primary structure comprises 247 residues: Adenosylcobinamide-GDP ribazoletransferase (247 aa).

Transmembrane regions (helical) follow at residues 34 to 54 (IVMFPFIGLILGGISGLIFIL), 59 to 79 (CGIPLAALFCILALALLTGGF), 113 to 133 (GGLALIFVLLAKILVVSELAL), 138 to 158 (MLAALAVACAAGHGSAVLLMY), 171 to 191 (VFIGKVSGRQTCITLGLAVIV), and 194 to 214 (VLLPGMQGLATMVVTLAAIFI).

This sequence belongs to the CobS family. It depends on Mg(2+) as a cofactor.

The protein localises to the cell inner membrane. The catalysed reaction is alpha-ribazole + adenosylcob(III)inamide-GDP = adenosylcob(III)alamin + GMP + H(+). It catalyses the reaction alpha-ribazole 5'-phosphate + adenosylcob(III)inamide-GDP = adenosylcob(III)alamin 5'-phosphate + GMP + H(+). Its pathway is cofactor biosynthesis; adenosylcobalamin biosynthesis; adenosylcobalamin from cob(II)yrinate a,c-diamide: step 7/7. Functionally, joins adenosylcobinamide-GDP and alpha-ribazole to generate adenosylcobalamin (Ado-cobalamin). Also synthesizes adenosylcobalamin 5'-phosphate from adenosylcobinamide-GDP and alpha-ribazole 5'-phosphate. The polypeptide is Adenosylcobinamide-GDP ribazoletransferase (Salmonella paratyphi A (strain ATCC 9150 / SARB42)).